The chain runs to 138 residues: Large ribosomal subunit protein uL14 (138 aa).

This sequence belongs to the universal ribosomal protein uL14 family. In terms of assembly, part of the 50S ribosomal subunit. Forms a cluster with proteins L3 and L24e, part of which may contact the 16S rRNA in 2 intersubunit bridges.

In terms of biological role, binds to 23S rRNA. Forms part of two intersubunit bridges in the 70S ribosome. The sequence is that of Large ribosomal subunit protein uL14 from Hyperthermus butylicus (strain DSM 5456 / JCM 9403 / PLM1-5).